The sequence spans 259 residues: Hydroxyethylthiazole kinase (259 aa).

M38 serves as a coordination point for substrate. ATP-binding residues include R113 and S158. G185 provides a ligand contact to substrate.

This sequence belongs to the Thz kinase family. Mg(2+) is required as a cofactor.

The enzyme catalyses 5-(2-hydroxyethyl)-4-methylthiazole + ATP = 4-methyl-5-(2-phosphooxyethyl)-thiazole + ADP + H(+). The protein operates within cofactor biosynthesis; thiamine diphosphate biosynthesis; 4-methyl-5-(2-phosphoethyl)-thiazole from 5-(2-hydroxyethyl)-4-methylthiazole: step 1/1. Its function is as follows. Catalyzes the phosphorylation of the hydroxyl group of 4-methyl-5-beta-hydroxyethylthiazole (THZ). This chain is Hydroxyethylthiazole kinase, found in Leuconostoc citreum (strain KM20).